Consider the following 347-residue polypeptide: Anthranilate phosphoribosyltransferase (347 aa).

Residues glycine 88, 91–92 (GD), threonine 96, 98–101 (NIST), 116–124 (KHGGRSVSS), and serine 128 contribute to the 5-phospho-alpha-D-ribose 1-diphosphate site. Glycine 88 is a binding site for anthranilate. A Mg(2+)-binding site is contributed by serine 100. Residue arginine 174 coordinates anthranilate. 2 residues coordinate Mg(2+): aspartate 233 and glutamate 234.

The protein belongs to the anthranilate phosphoribosyltransferase family. Homodimer. Requires Mg(2+) as cofactor.

It catalyses the reaction N-(5-phospho-beta-D-ribosyl)anthranilate + diphosphate = 5-phospho-alpha-D-ribose 1-diphosphate + anthranilate. The protein operates within amino-acid biosynthesis; L-tryptophan biosynthesis; L-tryptophan from chorismate: step 2/5. Catalyzes the transfer of the phosphoribosyl group of 5-phosphorylribose-1-pyrophosphate (PRPP) to anthranilate to yield N-(5'-phosphoribosyl)-anthranilate (PRA). The protein is Anthranilate phosphoribosyltransferase of Polaromonas sp. (strain JS666 / ATCC BAA-500).